Reading from the N-terminus, the 335-residue chain is Acetyl-coenzyme A carboxylase carboxyl transferase subunit alpha (335 aa).

One can recognise a CoA carboxyltransferase C-terminal domain in the interval 40-294 (QLETLATRRR…KEAIEKHLDT (255 aa)).

The protein belongs to the AccA family. In terms of assembly, acetyl-CoA carboxylase is a heterohexamer composed of biotin carboxyl carrier protein (AccB), biotin carboxylase (AccC) and two subunits each of ACCase subunit alpha (AccA) and ACCase subunit beta (AccD).

Its subcellular location is the cytoplasm. It carries out the reaction N(6)-carboxybiotinyl-L-lysyl-[protein] + acetyl-CoA = N(6)-biotinyl-L-lysyl-[protein] + malonyl-CoA. It functions in the pathway lipid metabolism; malonyl-CoA biosynthesis; malonyl-CoA from acetyl-CoA: step 1/1. Its function is as follows. Component of the acetyl coenzyme A carboxylase (ACC) complex. First, biotin carboxylase catalyzes the carboxylation of biotin on its carrier protein (BCCP) and then the CO(2) group is transferred by the carboxyltransferase to acetyl-CoA to form malonyl-CoA. The chain is Acetyl-coenzyme A carboxylase carboxyl transferase subunit alpha from Prochlorococcus marinus (strain MIT 9312).